Here is a 117-residue protein sequence, read N- to C-terminus: Gamma-aminobutyric acid receptor-associated protein-like 1 (117 aa).

G116 is lipidated: Phosphatidylethanolamine amidated glycine; alternate. G116 carries Phosphatidylserine amidated glycine; alternate lipidation. Position 117 (K117) is a propeptide, removed in mature form.

The protein belongs to the ATG8 family. Interacts with ATG13, OPRK1, RB1CC1 and ULK1. Interacts with TP53INP1 and TP53INP2. Directly interacts with SQSTM1. Interacts with ATG3, ATG7 and MAP15. Interacts with TECPR2. Interacts with TBC1D5. Interacts with MAPK15. Interacts with TRIM5. Interacts with MEFV and TRIM21. Interacts with WDFY3. Interacts with the reticulophagy receptor TEX264. Interacts with UBA5. Interacts with KBTBD6 and KBTBD7; the interaction is direct. Interacts with reticulophagy regulators RETREG1, RETREG2 and RETREG3. Interacts with IRGM. Interacts with DNM2. Interacts with NCOA4 (via C-terminus). In terms of processing, the precursor molecule is cleaved by ATG4 (ATG4A, ATG4B, ATG4C or ATG4D) to expose the glycine at the C-terminus and form the cytosolic form, GABARAPL1-I. The processed form is then activated by APG7L/ATG7, transferred to ATG3 and conjugated to phosphatidylethanolamine (PE) phospholipid to form the membrane-bound form, GABARAPL1-II. During non-canonical autophagy, the processed form is conjugated to phosphatidylserine (PS) phospholipid. ATG4 proteins also mediate the delipidation of PE-conjugated forms required for GABARAPL1 recycling when autophagosomes fuse with lysosomes. In addition, ATG4B and ATG4D mediate delipidation of ATG8 proteins conjugated to PS during non-canonical autophagy. ATG4B constitutes the major protein for proteolytic activation. ATG4D is the main enzyme for delipidation activity.

The protein resides in the cytoplasmic vesicle. It localises to the autophagosome. It is found in the cytoplasmic vesicle membrane. The protein localises to the cytoplasm. Its subcellular location is the cytoskeleton. The protein resides in the endoplasmic reticulum. It localises to the golgi apparatus. Its function is as follows. Ubiquitin-like modifier that increases cell-surface expression of kappa-type opioid receptor through facilitating anterograde intracellular trafficking of the receptor. Involved in formation of autophagosomal vacuoles. While LC3s are involved in elongation of the phagophore membrane, the GABARAP/GATE-16 subfamily is essential for a later stage in autophagosome maturation. Through its interaction with the reticulophagy receptor TEX264, participates in the remodeling of subdomains of the endoplasmic reticulum into autophagosomes upon nutrient stress, which then fuse with lysosomes for endoplasmic reticulum turnover. The chain is Gamma-aminobutyric acid receptor-associated protein-like 1 from Bos taurus (Bovine).